A 278-amino-acid chain; its full sequence is Potassium/proton antiporter CemA (278 aa).

A run of 4 helical transmembrane segments spans residues 61–81 (LIVLVVFPVVVHQVSKNFIIG), 155–175 (AIKNILADSISISVFILLIVL), 203–223 (IILFTDMFIGFHSPHGWEVVI), and 238–258 (FIFLFIATFPVSLDTVFKYWI).

The protein belongs to the CemA family.

The protein localises to the plastid. It is found in the chloroplast inner membrane. It catalyses the reaction K(+)(in) + H(+)(out) = K(+)(out) + H(+)(in). In terms of biological role, contributes to K(+)/H(+) antiport activity by supporting proton efflux to control proton extrusion and homeostasis in chloroplasts in a light-dependent manner to modulate photosynthesis. Prevents excessive induction of non-photochemical quenching (NPQ) under continuous-light conditions. Indirectly promotes efficient inorganic carbon uptake into chloroplasts. This Cyanidium caldarium (Red alga) protein is Potassium/proton antiporter CemA.